A 205-amino-acid polypeptide reads, in one-letter code: High frequency lysogenization protein HflD homolog (205 aa).

It belongs to the HflD family.

It is found in the cytoplasm. It localises to the cell inner membrane. In Shewanella piezotolerans (strain WP3 / JCM 13877), this protein is High frequency lysogenization protein HflD homolog.